A 320-amino-acid chain; its full sequence is Ferrochelatase (320 aa).

Fe cation is bound by residues His194 and Glu275.

Belongs to the ferrochelatase family. Monomer.

The protein resides in the cytoplasm. The enzyme catalyses heme b + 2 H(+) = protoporphyrin IX + Fe(2+). The protein operates within porphyrin-containing compound metabolism; protoheme biosynthesis; protoheme from protoporphyrin-IX: step 1/1. Functionally, catalyzes the ferrous insertion into protoporphyrin IX. In Salmonella typhi, this protein is Ferrochelatase.